The primary structure comprises 739 residues: Putative apoptosis-inducing factor 1, mitochondrial (739 aa).

The N-terminal 42 residues, 1 to 42 (MSIWGVRCLTQRFIRQAYILANRRLLGPVPQRSPPAYAPLRP), are a transit peptide targeting the mitochondrion. The interval 257-564 (YLIIGGGTAA…ARRNLYVAGD (308 aa)) is FAD-dependent oxidoreductase. FAD contacts are provided by residues 261–265 (GGGTA), arginine 295, lysine 300, valine 358, arginine 410, aspartate 564, and 580–581 (HH). Residues 644–681 (VDQLSESSDSDVPETSTSSSQSSKSDAGASQDGVTCDP) form a disordered region. The span at 656-676 (PETSTSSSQSSKSDAGASQDG) shows a compositional bias: low complexity.

Belongs to the FAD-dependent oxidoreductase family. FAD is required as a cofactor.

It is found in the mitochondrion intermembrane space. The enzyme catalyses A + NADH + H(+) = AH2 + NAD(+). Functionally, probable NADH oxidoreductase. Mitochondrial effector of cell death that plays roles in developmentally regulated cell death and normal mitochondrial function. This Drosophila melanogaster (Fruit fly) protein is Putative apoptosis-inducing factor 1, mitochondrial (AIF).